A 362-amino-acid chain; its full sequence is Holliday junction branch migration complex subunit RuvB (362 aa).

The tract at residues 1–183 (MADSSLVGGG…FGFTGHLEFY (183 aa)) is large ATPase domain (RuvB-L). ATP contacts are provided by residues Leu22, Arg23, Gly64, Lys67, Thr68, Thr69, 130 to 132 (EDF), Arg173, Tyr183, and Arg220. Residue Thr68 coordinates Mg(2+). The segment at 184-254 (SVEELELVLR…TASAALDMYE (71 aa)) is small ATPAse domain (RuvB-S). Residues 257–362 (KRGLDRLDRS…PVAEWLPNGQ (106 aa)) form a head domain (RuvB-H) region. DNA-binding residues include Arg312 and Arg317.

It belongs to the RuvB family. In terms of assembly, homohexamer. Forms an RuvA(8)-RuvB(12)-Holliday junction (HJ) complex. HJ DNA is sandwiched between 2 RuvA tetramers; dsDNA enters through RuvA and exits via RuvB. An RuvB hexamer assembles on each DNA strand where it exits the tetramer. Each RuvB hexamer is contacted by two RuvA subunits (via domain III) on 2 adjacent RuvB subunits; this complex drives branch migration. In the full resolvosome a probable DNA-RuvA(4)-RuvB(12)-RuvC(2) complex forms which resolves the HJ.

The protein localises to the cytoplasm. The enzyme catalyses ATP + H2O = ADP + phosphate + H(+). The RuvA-RuvB-RuvC complex processes Holliday junction (HJ) DNA during genetic recombination and DNA repair, while the RuvA-RuvB complex plays an important role in the rescue of blocked DNA replication forks via replication fork reversal (RFR). RuvA specifically binds to HJ cruciform DNA, conferring on it an open structure. The RuvB hexamer acts as an ATP-dependent pump, pulling dsDNA into and through the RuvAB complex. RuvB forms 2 homohexamers on either side of HJ DNA bound by 1 or 2 RuvA tetramers; 4 subunits per hexamer contact DNA at a time. Coordinated motions by a converter formed by DNA-disengaged RuvB subunits stimulates ATP hydrolysis and nucleotide exchange. Immobilization of the converter enables RuvB to convert the ATP-contained energy into a lever motion, pulling 2 nucleotides of DNA out of the RuvA tetramer per ATP hydrolyzed, thus driving DNA branch migration. The RuvB motors rotate together with the DNA substrate, which together with the progressing nucleotide cycle form the mechanistic basis for DNA recombination by continuous HJ branch migration. Branch migration allows RuvC to scan DNA until it finds its consensus sequence, where it cleaves and resolves cruciform DNA. The polypeptide is Holliday junction branch migration complex subunit RuvB (Arthrobacter sp. (strain FB24)).